Here is a 678-residue protein sequence, read N- to C-terminus: RNA helicase NPH-II (678 aa).

Positions phenylalanine 175–histidine 351 constitute a Helicase ATP-binding domain. Glycine 188–threonine 195 contributes to the ATP binding site. Residues aspartate 300 to histidine 303 carry the DEXH box motif. A Helicase C-terminal domain is found at proline 371–leucine 546.

This sequence belongs to the DEAD box helicase family. DEAH subfamily. In terms of assembly, monomer.

It localises to the virion. The catalysed reaction is ATP + H2O = ADP + phosphate + H(+). NTP-dependent helicase that catalyzes unidirectional unwinding of 3'tailed duplex RNAs and plays an important role during transcription of early mRNAs, presumably by preventing R-loop formation behind the elongating RNA polymerase. Might also play a role in the export of newly synthesized mRNA chains out of the core into the cytoplasm. Required for replication and propagation of viral particles. The polypeptide is RNA helicase NPH-II (OPG084) (Oryctolagus cuniculus (Rabbit)).